Reading from the N-terminus, the 511-residue chain is Maturase K (511 aa).

This sequence belongs to the intron maturase 2 family. MatK subfamily.

It localises to the plastid. It is found in the chloroplast. Its function is as follows. Usually encoded in the trnK tRNA gene intron. Probably assists in splicing its own and other chloroplast group II introns. This chain is Maturase K, found in Hordeum jubatum (Foxtail barley).